The primary structure comprises 185 residues: dCTP deaminase (185 aa).

Residues 107 to 112 (KSTYAR), 131 to 133 (TLE), Gln152, Tyr166, and Gln176 contribute to the dCTP site. Residue Glu133 is the Proton donor/acceptor of the active site.

This sequence belongs to the dCTP deaminase family. In terms of assembly, homotrimer.

The enzyme catalyses dCTP + H2O + H(+) = dUTP + NH4(+). The protein operates within pyrimidine metabolism; dUMP biosynthesis; dUMP from dCTP (dUTP route): step 1/2. In terms of biological role, catalyzes the deamination of dCTP to dUTP. This Anaplasma phagocytophilum (strain HZ) protein is dCTP deaminase.